A 314-amino-acid chain; its full sequence is Acetyl-coenzyme A carboxylase carboxyl transferase subunit beta (314 aa).

One can recognise a CoA carboxyltransferase N-terminal domain in the interval 37-307 (LWQKCPACDA…MSLPALEPTY (271 aa)). Positions 41, 44, 60, and 63 each coordinate Zn(2+). The C4-type zinc finger occupies 41-63 (CPACDALTYTKDLQQNWQVCPSC).

This sequence belongs to the AccD/PCCB family. Acetyl-CoA carboxylase is a heterohexamer composed of biotin carboxyl carrier protein (AccB), biotin carboxylase (AccC) and two subunits each of ACCase subunit alpha (AccA) and ACCase subunit beta (AccD). Requires Zn(2+) as cofactor.

The protein localises to the cytoplasm. The catalysed reaction is N(6)-carboxybiotinyl-L-lysyl-[protein] + acetyl-CoA = N(6)-biotinyl-L-lysyl-[protein] + malonyl-CoA. It functions in the pathway lipid metabolism; malonyl-CoA biosynthesis; malonyl-CoA from acetyl-CoA: step 1/1. Its function is as follows. Component of the acetyl coenzyme A carboxylase (ACC) complex. Biotin carboxylase (BC) catalyzes the carboxylation of biotin on its carrier protein (BCCP) and then the CO(2) group is transferred by the transcarboxylase to acetyl-CoA to form malonyl-CoA. The chain is Acetyl-coenzyme A carboxylase carboxyl transferase subunit beta from Synechococcus sp. (strain JA-3-3Ab) (Cyanobacteria bacterium Yellowstone A-Prime).